The primary structure comprises 163 residues: Crossover junction endodeoxyribonuclease RuvC (163 aa).

Catalysis depends on residues Asp9, Glu76, and Asp148. The Mg(2+) site is built by Asp9, Glu76, and Asp148.

This sequence belongs to the RuvC family. As to quaternary structure, homodimer which binds Holliday junction (HJ) DNA. The HJ becomes 2-fold symmetrical on binding to RuvC with unstacked arms; it has a different conformation from HJ DNA in complex with RuvA. In the full resolvosome a probable DNA-RuvA(4)-RuvB(12)-RuvC(2) complex forms which resolves the HJ. Requires Mg(2+) as cofactor.

The protein resides in the cytoplasm. It catalyses the reaction Endonucleolytic cleavage at a junction such as a reciprocal single-stranded crossover between two homologous DNA duplexes (Holliday junction).. In terms of biological role, the RuvA-RuvB-RuvC complex processes Holliday junction (HJ) DNA during genetic recombination and DNA repair. Endonuclease that resolves HJ intermediates. Cleaves cruciform DNA by making single-stranded nicks across the HJ at symmetrical positions within the homologous arms, yielding a 5'-phosphate and a 3'-hydroxyl group; requires a central core of homology in the junction. The consensus cleavage sequence is 5'-(A/T)TT(C/G)-3'. Cleavage occurs on the 3'-side of the TT dinucleotide at the point of strand exchange. HJ branch migration catalyzed by RuvA-RuvB allows RuvC to scan DNA until it finds its consensus sequence, where it cleaves and resolves the cruciform DNA. This chain is Crossover junction endodeoxyribonuclease RuvC, found in Nostoc sp. (strain PCC 7120 / SAG 25.82 / UTEX 2576).